We begin with the raw amino-acid sequence, 207 residues long: MSEVLDLSAEARERAGKGASRAIRREGRVPAVIYGEKQEPASIHVEEKVLMKLLHTGHFFNSVVMLDVGGKKVRTLPKDVQFHPVTDRPLHVDFLRIGEHTKVNVNVPVHFKDEELSPGLKRGGVLNVVIHDLGLSVDAAEIPEEIVISLKGLEVGESIHLSQVALPKGASAQDHEDITIATIVAPSALKSAEGEEAAEAGEEAAEG.

This sequence belongs to the bacterial ribosomal protein bL25 family. CTC subfamily. As to quaternary structure, part of the 50S ribosomal subunit; part of the 5S rRNA/L5/L18/L25 subcomplex. Contacts the 5S rRNA. Binds to the 5S rRNA independently of L5 and L18.

Its function is as follows. This is one of the proteins that binds to the 5S RNA in the ribosome where it forms part of the central protuberance. This Rhizorhabdus wittichii (strain DSM 6014 / CCUG 31198 / JCM 15750 / NBRC 105917 / EY 4224 / RW1) (Sphingomonas wittichii) protein is Large ribosomal subunit protein bL25.